The primary structure comprises 282 residues: 1-deoxy-11-beta-hydroxypentalenate dehydrogenase (282 aa).

G12 to D36 contributes to the NAD(+) binding site. S144 provides a ligand contact to substrate. Y157 functions as the Proton acceptor in the catalytic mechanism. An NAD(+)-binding site is contributed by K161. The disordered stretch occupies residues P258–H282. A compositionally biased stretch (low complexity) spans W267 to H282.

The protein belongs to the short-chain dehydrogenases/reductases (SDR) family.

It carries out the reaction 1-deoxy-11beta-hydroxypentalenate + NAD(+) = 1-deoxy-11-oxopentalenate + NADH + H(+). Its pathway is antibiotic biosynthesis; pentalenolactone biosynthesis. In terms of biological role, catalyzes the oxidation of 1-deoxy-11-beta-hydroxypentalenic acid to 1-deoxy-11-oxopentalenic acid in the biosynthesis of pentalenolactone antibiotic. In Streptomyces arenae, this protein is 1-deoxy-11-beta-hydroxypentalenate dehydrogenase (pntF).